The chain runs to 540 residues: Chaperonin GroEL (540 aa).

Residues 29 to 32, 86 to 90, Gly413, 476 to 478, and Asp492 contribute to the ATP site; these read TIGP, DGTTT, and NAA. The segment at 520–540 is disordered; the sequence is DKPEPESNNQMPATPGMGGMM.

The protein belongs to the chaperonin (HSP60) family. Forms a cylinder of 14 subunits composed of two heptameric rings stacked back-to-back. Interacts with the co-chaperonin GroES.

The protein localises to the cytoplasm. The catalysed reaction is ATP + H2O + a folded polypeptide = ADP + phosphate + an unfolded polypeptide.. Functionally, together with its co-chaperonin GroES, plays an essential role in assisting protein folding. The GroEL-GroES system forms a nano-cage that allows encapsulation of the non-native substrate proteins and provides a physical environment optimized to promote and accelerate protein folding. The chain is Chaperonin GroEL from Ligilactobacillus salivarius (strain UCC118) (Lactobacillus salivarius).